Consider the following 341-residue polypeptide: Golgi-associated RAB2 interactor protein 1B (341 aa).

Belongs to the GARIN family. In terms of tissue distribution, expressed in testis (at protein level).

The protein localises to the golgi apparatus. Its function is as follows. RAB2B effector protein required for accurate acrosome formation and normal male fertility. In complex with RAB2A/RAB2B, seems to suppress excessive vesicle trafficking during acrosome formation. The chain is Golgi-associated RAB2 interactor protein 1B from Mus musculus (Mouse).